The following is a 539-amino-acid chain: Probable malate:quinone oxidoreductase 3 (539 aa).

The disordered stretch occupies residues 516–539; the sequence is LEPPVSPQRPESIRPADSQGVASR.

It belongs to the MQO family. The cofactor is FAD.

The enzyme catalyses (S)-malate + a quinone = a quinol + oxaloacetate. Its pathway is carbohydrate metabolism; tricarboxylic acid cycle; oxaloacetate from (S)-malate (quinone route): step 1/1. This is Probable malate:quinone oxidoreductase 3 from Pseudomonas putida (strain ATCC 47054 / DSM 6125 / CFBP 8728 / NCIMB 11950 / KT2440).